The primary structure comprises 177 residues: Large ribosomal subunit protein uL6 (177 aa).

Belongs to the universal ribosomal protein uL6 family. As to quaternary structure, part of the 50S ribosomal subunit.

Functionally, this protein binds to the 23S rRNA, and is important in its secondary structure. It is located near the subunit interface in the base of the L7/L12 stalk, and near the tRNA binding site of the peptidyltransferase center. The polypeptide is Large ribosomal subunit protein uL6 (Azorhizobium caulinodans (strain ATCC 43989 / DSM 5975 / JCM 20966 / LMG 6465 / NBRC 14845 / NCIMB 13405 / ORS 571)).